We begin with the raw amino-acid sequence, 343 residues long: Protein RecA (343 aa).

65-72 is an ATP binding site; sequence GPESSGKT.

Belongs to the RecA family.

The protein resides in the cytoplasm. Functionally, can catalyze the hydrolysis of ATP in the presence of single-stranded DNA, the ATP-dependent uptake of single-stranded DNA by duplex DNA, and the ATP-dependent hybridization of homologous single-stranded DNAs. It interacts with LexA causing its activation and leading to its autocatalytic cleavage. This Xanthomonas campestris pv. campestris (strain 8004) protein is Protein RecA.